The primary structure comprises 193 residues: Putative manganese efflux pump MntP (193 aa).

Transmembrane regions (helical) follow at residues 6 to 26 (VVFV…GIAC), 39 to 59 (VAGT…YAGL), 61 to 81 (IADV…TVIG), 106 to 126 (LGLL…GLTF), 132 to 152 (NIGL…YLGF), and 165 to 185 (WVGI…LAEH).

It belongs to the MntP (TC 9.B.29) family.

Its subcellular location is the cell membrane. Its function is as follows. Probably functions as a manganese efflux pump. In Dehalococcoides mccartyi (strain ATCC BAA-2266 / KCTC 15142 / 195) (Dehalococcoides ethenogenes (strain 195)), this protein is Putative manganese efflux pump MntP.